Here is a 704-residue protein sequence, read N- to C-terminus: Methionine--tRNA ligase (704 aa).

The 'HIGH' region motif lies at 17–27 (PYANGPIHLGH). Zn(2+) contacts are provided by cysteine 148, cysteine 151, cysteine 161, and cysteine 164. The 'KMSKS' region signature appears at 348-352 (KMSKS). An ATP-binding site is contributed by lysine 351. Positions 603 to 704 (ELSKVELRVG…KDAKPGDRLK (102 aa)) constitute a tRNA-binding domain.

It belongs to the class-I aminoacyl-tRNA synthetase family. MetG type 1 subfamily. In terms of assembly, homodimer. Zn(2+) is required as a cofactor.

It is found in the cytoplasm. The catalysed reaction is tRNA(Met) + L-methionine + ATP = L-methionyl-tRNA(Met) + AMP + diphosphate. In terms of biological role, is required not only for elongation of protein synthesis but also for the initiation of all mRNA translation through initiator tRNA(fMet) aminoacylation. In Leptospira borgpetersenii serovar Hardjo-bovis (strain L550), this protein is Methionine--tRNA ligase.